The following is a 479-amino-acid chain: Serine protease HTRA1A (479 aa).

Positions 1-18 (MILVTLFCICALVTSLQA) are cleaved as a signal peptide. The region spanning 27-111 (VIGGCPSHCD…RGKQGVCVCK (85 aa)) is the IGFBP N-terminal domain. 6 cysteine pairs are disulfide-bonded: cysteine 31–cysteine 56, cysteine 35–cysteine 58, cysteine 40–cysteine 59, cysteine 47–cysteine 62, cysteine 70–cysteine 87, and cysteine 81–cysteine 108. Residues 96–155 (SATVRRRGKQGVCVCKSSDPVCGSDGVSYRDICELKRVSNRAQSLQQPPVLFIQRGACGT) enclose the Kazal-like domain. A serine protease region spans residues 203-363 (GSGFVVSDDG…IPSDKIRQFL (161 aa)). Residues histidine 219, aspartate 249, and serine 327 each act as charge relay system in the active site. One can recognise a PDZ domain in the interval 364–466 (AESYDRLARG…LRVVVRRGNE (103 aa)).

Belongs to the peptidase S1C family. In terms of assembly, forms homotrimers. In the presence of substrate, may form higher-order multimers in a PDZ-independent manner.

It is found in the secreted. The protein resides in the cytoplasm. The protein localises to the cytosol. In terms of biological role, serine protease with a variety of targets, including extracellular matrix proteins and proteoglycans. Through cleavage of proteoglycans, may release soluble FGF-glycosaminoglycan complexes that promote the range and intensity of FGF signals in the extracellular space. Regulates the availability of insulin-like growth factors (IGFs) by cleaving IGF-binding proteins. Inhibits signaling mediated by TGF-beta family members. Consequently, may regulate many physiological processes. Intracellularly, degrades TSC2, leading to the activation of TSC2 downstream targets. This Danio rerio (Zebrafish) protein is Serine protease HTRA1A (htra1a).